The primary structure comprises 107 residues: QSIIRKLILVSKGTNISVDNNYVVRPTSIKVYIEVVKYLVSQGANIRADNDCAVRFASRNGHLEVVKYLVSLGANIRADNDCAVRWASRNGHLDVVEYLVSLGAVLS.

ANK repeat units lie at residues 19–48, 49–78, and 80–107; these read DNNY…NIRA, DNDC…NIRA, and NDCA…AVLS.

The protein is Putative ankyrin repeat protein L14 of Acanthamoeba polyphaga (Amoeba).